The primary structure comprises 796 residues: Vacuolar protein sorting-associated protein 35 (796 aa).

Ser-7 is modified (phosphoserine). 2 interaction with SNX3 regions span residues Val-25 to Lys-44 and Asp-205 to Glu-215. The interval Cys-438–Leu-796 is interaction with SLC11A2. Residues Ser-500–Gly-693 are interaction with IGF2R cytoplasmic domain. Residues His-776–Leu-796 form a disordered region. The residue at position 783 (Ser-783) is a Phosphoserine. Residue Tyr-791 is modified to Phosphotyrosine.

Belongs to the VPS35 family. In terms of assembly, component of the heterotrimeric retromer cargo-selective complex (CSC), also described as vacuolar protein sorting subcomplex (VPS) formed by VPS26 (VPS26A or VPS26B), VPS29 and VPS35. The CSC has a highly elongated structure with VPS26 and VPS29 binding independently at opposite distal ends of VPS35 as central platform. The CSC is believed to associate with variable sorting nexins to form functionally distinct retromer complex variants. The originally described retromer complex (also called SNX-BAR retromer) is a pentamer containing the CSC and a heterodimeric membrane-deforming subcomplex formed between SNX1 or SNX2 and SNX5 or SNX6 (also called SNX-BAR subcomplex); the affinity between the respective CSC and SNX-BAR subcomplexes is low. The CSC associates with SNX3 to form a SNX3-retromer complex. The CSC associates with SNX27, the WASH complex and the SNX-BAR subcomplex to form the SNX27-retromer complex. Interacts with VPS26A, VPS29, VPS26B and LRRK2. Interacts with SNX1, SNX2, IGF2R, SNX3, GOLPH3, SLC11A2, WASHC2, FKBP15, WASHC1, EHD1. Interacts with MAGEL2; leading to recruitment of the TRIM27:MAGEL2 E3 ubiquitin ligase complex retromer-containing endosomes. Interacts with SORCS2. Detected in striatum (at protein level). Ubiquitous. Highly expressed in fat tissue, testis, brain, kidney, thymus, liver and pancreas, and at lower levels in heart, intestine and skeletal muscle. Detected in oocytes, pre-implantation embryos and at 6.5-12.5 dpc.

The protein localises to the cytoplasm. The protein resides in the membrane. It localises to the endosome. It is found in the early endosome. Its subcellular location is the late endosome. Its function is as follows. Acts as a component of the retromer cargo-selective complex (CSC). The CSC is believed to be the core functional component of retromer or respective retromer complex variants acting to prevent missorting of selected transmembrane cargo proteins into the lysosomal degradation pathway. The recruitment of the CSC to the endosomal membrane involves RAB7A and SNX3. The CSC seems to associate with the cytoplasmic domain of cargo proteins predominantly via VPS35; however, these interactions seem to be of low affinity and retromer SNX proteins may also contribute to cargo selectivity thus questioning the classical function of the CSC. The SNX-BAR retromer mediates retrograde transport of cargo proteins from endosomes to the trans-Golgi network (TGN) and is involved in endosome-to-plasma membrane transport for cargo protein recycling. The SNX3-retromer mediates the retrograde transport of WLS distinct from the SNX-BAR retromer pathway. The SNX27-retromer is believed to be involved in endosome-to-plasma membrane trafficking and recycling of a broad spectrum of cargo proteins. The CSC seems to act as recruitment hub for other proteins, such as the WASH complex and TBC1D5. Required for retrograde transport of lysosomal enzyme receptor IGF2R and SLC11A2. Required to regulate transcytosis of the polymeric immunoglobulin receptor (pIgR-pIgA). Required for endosomal localization of WASHC2 and mediates the association of the CSC with the WASH complex. This Mus musculus (Mouse) protein is Vacuolar protein sorting-associated protein 35 (Vps35).